We begin with the raw amino-acid sequence, 320 residues long: L-lactate dehydrogenase (320 aa).

Residues Val-18, Asp-39, Arg-44, Tyr-69, and 83-84 contribute to the NAD(+) site; that span reads GA. 2 residues coordinate substrate: Gln-86 and Arg-92. NAD(+) contacts are provided by residues Thr-105, 122–124, and Ser-147; that span reads AAN. Substrate is bound at residue 124–127; sequence NPVD. 152-155 contributes to the substrate binding site; sequence DSAR. His-179 serves as the catalytic Proton acceptor. Tyr-223 carries the post-translational modification Phosphotyrosine. Position 232 (Thr-232) interacts with substrate.

It belongs to the LDH/MDH superfamily. LDH family. Homotetramer.

Its subcellular location is the cytoplasm. The catalysed reaction is (S)-lactate + NAD(+) = pyruvate + NADH + H(+). Its pathway is fermentation; pyruvate fermentation to lactate; (S)-lactate from pyruvate: step 1/1. Catalyzes the conversion of lactate to pyruvate. The chain is L-lactate dehydrogenase from Pediococcus pentosaceus (strain ATCC 25745 / CCUG 21536 / LMG 10740 / 183-1w).